The chain runs to 838 residues: Valine--tRNA ligase (838 aa).

A 'HIGH' region motif is present at residues 46 to 56 (PNLTGTLHIGH). Positions 514–518 (KMSKS) match the 'KMSKS' region motif. ATP is bound at residue Lys-517. Residues 768-838 (VDNAANNLAH…HLIAKLTKAE (71 aa)) are a coiled coil.

The protein belongs to the class-I aminoacyl-tRNA synthetase family. ValS type 1 subfamily. Monomer.

It localises to the cytoplasm. It catalyses the reaction tRNA(Val) + L-valine + ATP = L-valyl-tRNA(Val) + AMP + diphosphate. In terms of biological role, catalyzes the attachment of valine to tRNA(Val). As ValRS can inadvertently accommodate and process structurally similar amino acids such as threonine, to avoid such errors, it has a 'posttransfer' editing activity that hydrolyzes mischarged Thr-tRNA(Val) in a tRNA-dependent manner. The chain is Valine--tRNA ligase from Mycoplasma pneumoniae (strain ATCC 29342 / M129 / Subtype 1) (Mycoplasmoides pneumoniae).